Here is a 77-residue protein sequence, read N- to C-terminus: Large ribosomal subunit protein uL24 (77 aa).

Residues 42–61 (KKHQKPSQTNANGGVVESEG) form a disordered region.

This sequence belongs to the universal ribosomal protein uL24 family. In terms of assembly, part of the 50S ribosomal subunit.

One of two assembly initiator proteins, it binds directly to the 5'-end of the 23S rRNA, where it nucleates assembly of the 50S subunit. Its function is as follows. One of the proteins that surrounds the polypeptide exit tunnel on the outside of the subunit. In Lactobacillus acidophilus (strain ATCC 700396 / NCK56 / N2 / NCFM), this protein is Large ribosomal subunit protein uL24.